The primary structure comprises 256 residues: Putative bidirectional sugar transporter SWEET7e (256 aa).

At 1–9 the chain is on the extracellular side; the sequence is MVSPDLIRN. Residues 10-30 form a helical membrane-spanning segment; sequence VVGIVGNAISFGLFLSPVLTF. The 88-residue stretch at 10-97 folds into the MtN3/slv 1 domain; sequence VVGIVGNAIS…TIFFLFSNKK (88 aa). Topologically, residues 31 to 45 are cytoplasmic; it reads WRIIKEKDMKYFKAD. A helical transmembrane segment spans residues 46–66; that stretch reads PYLATLLNCMLWVFYGLPIVH. At 67 to 69 the chain is on the extracellular side; that stretch reads PNS. The chain crosses the membrane as a helical span at residues 70 to 90; the sequence is ILVVTINGIGLVIEAVYLTIF. At 91–100 the chain is on the cytoplasmic side; that stretch reads FLFSNKKNKK. A helical membrane pass occupies residues 101–121; it reads MGVVLATEALFMAAVALGVLL. The Extracellular segment spans residues 122–130; it reads GAHTHQRRS. A helical transmembrane segment spans residues 131–151; sequence LIVGILCVIFGTIMYSSPLTI. In terms of domain architecture, MtN3/slv 2 spans 133–212; sequence VGILCVIFGT…LMQLILDKNQ (80 aa). Residues 152 to 164 lie on the Cytoplasmic side of the membrane; it reads MSQVVKTKSVEYM. The helical transmembrane segment at 165-185 threads the bilayer; that stretch reads PLLLSVVSFLNGLCWTSYALI. Residue R186 is a topological domain, extracellular. The chain crosses the membrane as a helical span at residues 187–207; that stretch reads FDIFITIPNGLGVLFTLMQLI. Residues 208–256 are Cytoplasmic-facing; sequence LDKNQDKNLELPTVAPVAKETSIVTPVSKDDDINGSTASHVIINITKEP.

Belongs to the SWEET sugar transporter family. Forms homooligomers and/or heterooligomers.

It localises to the cell membrane. In terms of biological role, mediates both low-affinity uptake and efflux of sugar across the plasma membrane. The polypeptide is Putative bidirectional sugar transporter SWEET7e (SWEET7E) (Oryza sativa subsp. japonica (Rice)).